A 43-amino-acid chain; its full sequence is MTSGPNQPVSYPIFTVRWLAVHTLAVPSVFFLGAIAAMQFIQR.

The chain crosses the membrane as a helical span at residues 18 to 34; the sequence is WLAVHTLAVPSVFFLGA. Position 22 (His22) interacts with heme.

This sequence belongs to the PsbE/PsbF family. In terms of assembly, heterodimer of an alpha subunit and a beta subunit. PSII is composed of 1 copy each of membrane proteins PsbA, PsbB, PsbC, PsbD, PsbE, PsbF, PsbH, PsbI, PsbJ, PsbK, PsbL, PsbM, PsbT, PsbX, PsbY, PsbZ, Psb30/Ycf12, peripheral proteins PsbO, CyanoQ (PsbQ), PsbU, PsbV and a large number of cofactors. It forms dimeric complexes. Heme b is required as a cofactor.

Its subcellular location is the cellular thylakoid membrane. Functionally, this b-type cytochrome is tightly associated with the reaction center of photosystem II (PSII). PSII is a light-driven water:plastoquinone oxidoreductase that uses light energy to abstract electrons from H(2)O, generating O(2) and a proton gradient subsequently used for ATP formation. It consists of a core antenna complex that captures photons, and an electron transfer chain that converts photonic excitation into a charge separation. This Picosynechococcus sp. (strain ATCC 27264 / PCC 7002 / PR-6) (Agmenellum quadruplicatum) protein is Cytochrome b559 subunit beta.